The primary structure comprises 534 residues: NEDD8-activating enzyme E1 regulatory subunit (534 aa).

Position 2 is an N-acetylalanine (alanine 2). Lysine 6 and lysine 341 each carry N6-acetyllysine. The segment at 331-344 (DMIADSNKYIKLQN) is interaction with UBA3.

This sequence belongs to the ubiquitin-activating E1 family. ULA1 subfamily. Heterodimer of UBA3 and NAE1. The complex binds NEDD8 and UBE2M. Binds APP and TP53BP2. Post-translationally, ubiquitinated by TRIP12, leading to its degradation by the proteasome. As to expression, expressed throughout the brain. In hippocampus, strongly expressed in granule cells and in the pyramidal cell layer. Strongly expressed in the piriform cortex. In the cerebellum, expressed only in Purkinje cells.

The protein localises to the cell membrane. Its pathway is protein modification; protein neddylation. Its activity is regulated as follows. Binding of TP53BP2 to the regulatory subunit NAE1 decreases neddylation activity. Functionally, regulatory subunit of the dimeric UBA3-NAE1 E1 enzyme. E1 activates NEDD8 by first adenylating its C-terminal glycine residue with ATP, thereafter linking this residue to the side chain of the catalytic cysteine, yielding a NEDD8-UBA3 thioester and free AMP. E1 finally transfers NEDD8 to the catalytic cysteine of UBE2M. Necessary for cell cycle progression through the S-M checkpoint. Overexpression of NAE1 causes apoptosis through deregulation of NEDD8 conjugation. The covalent attachment of NEDD8 to target proteins is known as 'neddylation' and the process is involved in the regulation of cell growth, viability and development. This chain is NEDD8-activating enzyme E1 regulatory subunit (Nae1), found in Rattus norvegicus (Rat).